We begin with the raw amino-acid sequence, 449 residues long: MPKPIVAIVGRPNVGKSTFFNRLIGERRAIVEDIPGTTRDRLYGDTFWNGREFTVVDTAGLLFGDEDPSLPEVEIARRTRVQAEHAIAEADAIIFMVDGRDGLTTADADVADILRTTAKPVVLAVNKCDSQERMLDAVEFYALNLGDPIPMSAFHGLGTGDVLDRLTEYFPPKTFEKDEERHLRVAIVGRPNVGKSSLLNRLLGKERSVVSPIPGTTRDPIDTTITYYGEPITLIDTAGIRRAGKIERGIEKYSVLRTLRAIERCDVAMLLVDATEGVTAQDTHIAGMVIEAKKGLILVVNKWDAITKDSQTYYEFEHRVREAFKFVDYAPIVFISALTGQRVSHLLDYAREIYAQRQKRIPTSELNNFLREVVVQQPPMAVKKGAHLRLYYAVQPQTEPPVFLFFANDSELVHWSYARYLENRLRERYGFQGTPIVIVFRSRERKEER.

EngA-type G domains are found at residues 4–174 (PIVA…PPKT) and 183–358 (LRVA…AQRQ). GTP is bound by residues 10–17 (GRPNVGKS), 57–61 (DTAGL), 126–129 (NKCD), 189–196 (GRPNVGKS), 236–240 (DTAGI), and 301–304 (NKWD). One can recognise a KH-like domain in the interval 359–444 (KRIPTSELNN…PIVIVFRSRE (86 aa)).

This sequence belongs to the TRAFAC class TrmE-Era-EngA-EngB-Septin-like GTPase superfamily. EngA (Der) GTPase family. In terms of assembly, associates with the 50S ribosomal subunit.

In terms of biological role, GTPase that plays an essential role in the late steps of ribosome biogenesis. The sequence is that of GTPase Der from Chloroflexus aggregans (strain MD-66 / DSM 9485).